The sequence spans 179 residues: Inner membrane-spanning protein YciB (179 aa).

The next 5 helical transmembrane spans lie at 24 to 44 (TATGVLMAATVLQMGIIYAME), 49 to 69 (AMQKATLVLILLFGTLTLVLH), 76 to 96 (WKPTVLYGAMAIALAVALWAL), 121 to 141 (VAWIGYCLFMAAINGYVAAYF), and 151 to 171 (LWGYVFPIVFLVAQGLYISPH).

The protein belongs to the YciB family.

It is found in the cell inner membrane. Functionally, plays a role in cell envelope biogenesis, maintenance of cell envelope integrity and membrane homeostasis. The polypeptide is Inner membrane-spanning protein YciB (Variovorax paradoxus (strain S110)).